The sequence spans 153 residues: ATP synthase subunit b' (153 aa).

A helical membrane pass occupies residues Leu23 to Phe40.

It belongs to the ATPase B chain family. As to quaternary structure, F-type ATPases have 2 components, F(1) - the catalytic core - and F(0) - the membrane proton channel. F(1) has five subunits: alpha(3), beta(3), gamma(1), delta(1), epsilon(1). F(0) has four main subunits: a(1), b(1), b'(1) and c(10-14). The alpha and beta chains form an alternating ring which encloses part of the gamma chain. F(1) is attached to F(0) by a central stalk formed by the gamma and epsilon chains, while a peripheral stalk is formed by the delta, b and b' chains.

The protein resides in the cellular thylakoid membrane. Its function is as follows. F(1)F(0) ATP synthase produces ATP from ADP in the presence of a proton or sodium gradient. F-type ATPases consist of two structural domains, F(1) containing the extramembraneous catalytic core and F(0) containing the membrane proton channel, linked together by a central stalk and a peripheral stalk. During catalysis, ATP synthesis in the catalytic domain of F(1) is coupled via a rotary mechanism of the central stalk subunits to proton translocation. Functionally, component of the F(0) channel, it forms part of the peripheral stalk, linking F(1) to F(0). The b'-subunit is a diverged and duplicated form of b found in plants and photosynthetic bacteria. The polypeptide is ATP synthase subunit b' (Prochlorococcus marinus (strain AS9601)).